Consider the following 656-residue polypeptide: PAN2-PAN3 deadenylation complex subunit pan3 (656 aa).

Disordered regions lie at residues 1–24 (MAATRYNSGDLRRQVGSPRAKNRD) and 75–117 (SFTP…QQAN). The C3H1-type zinc-finger motif lies at 24 to 53 (DTKETLCRNVVIYGHCRWEDSGCTFNHDQN). The short motif at 63-83 (NSNRRVFNVESPSFTPANQQQ) is the PABPC-interacting motif-2 (PAM-2) element. Polar residues-rich tracts occupy residues 75-96 (SFTPANQQQSAGKKSTFSSQAA) and 107-117 (GTSTPTLQQAN). The tract at residues 251-514 (QLLPNSGLPN…TVETLLGGIT (264 aa)) is pseudokinase domain. ATP is bound by residues 275–280 (TRNSTC), R302, 352–359 (DFHPLSET), and 412–413 (SK). Positions 515–553 (THLANFANFVMQESDEKEFHLMRELENGRIARLMFKLSV) form a coiled coil. The knob domain stretch occupies residues 554–656 (VNERGDSCGV…SKPSATGATI (103 aa)).

This sequence belongs to the protein kinase superfamily. PAN3 family. Homodimer. Forms a heterotrimer with a catalytic subunit par-1/pan2 to form the poly(A)-nuclease (PAN) deadenylation complex. Interacts (via PAM-2 motif) with poly(A)-binding protein pabp-1 (via PABC domain), conferring substrate specificity of the enzyme complex.

Its subcellular location is the cytoplasm. Regulatory subunit of the poly(A)-nuclease (PAN) deadenylation complex, one of two cytoplasmic mRNA deadenylases involved in mRNA turnover. PAN specifically shortens poly(A) tails of RNA and the activity is stimulated by poly(A)-binding protein pabp-1. PAN deadenylation is followed by rapid degradation of the shortened mRNA tails by the CCR4-NOT complex. Deadenylated mRNAs are then degraded by two alternative mechanisms, namely exosome-mediated 3'-5' exonucleolytic degradation, or deadenylation-dependent mRNA decaping and subsequent 5'-3' exonucleolytic degradation by rgb-30/xrn1. May also be involved in post-transcriptional maturation of mRNA poly(A) tails. par-2/pan3 acts as a positive regulator for PAN activity, recruiting the catalytic subunit par-1/pan2 to mRNA via its interaction with RNA and with pabp-1. The protein is PAN2-PAN3 deadenylation complex subunit pan3 (par-2) of Neurospora crassa (strain ATCC 24698 / 74-OR23-1A / CBS 708.71 / DSM 1257 / FGSC 987).